The chain runs to 353 residues: Photosystem II protein D1 (353 aa).

T2 is subject to N-acetylthreonine. T2 is modified (phosphothreonine). The next 3 membrane-spanning stretches (helical) occupy residues 29-46, 118-133, and 142-156; these read YIGW…TATS, HFLL…EWEL, and WIAV…AATA. A chlorophyll a-binding site is contributed by H118. Y126 is a binding site for pheophytin a. The [CaMn4O5] cluster site is built by D170 and E189. The chain crosses the membrane as a helical span at residues 197-218; sequence FHMLGVAGVFGGSLFSAMHGSL. H198 is a chlorophyll a binding site. A quinone is bound by residues H215 and 264–265; that span reads SF. Position 215 (H215) interacts with Fe cation. H272 contributes to the Fe cation binding site. A helical transmembrane segment spans residues 274 to 288; sequence FLAAWPVIGIWFTAL. Positions 332, 333, 342, and 344 each coordinate [CaMn4O5] cluster. Positions 345 to 353 are excised as a propeptide; it reads AVEAPSTNG.

This sequence belongs to the reaction center PufL/M/PsbA/D family. As to quaternary structure, PSII is composed of 1 copy each of membrane proteins PsbA, PsbB, PsbC, PsbD, PsbE, PsbF, PsbH, PsbI, PsbJ, PsbK, PsbL, PsbM, PsbT, PsbX, PsbY, PsbZ, Psb30/Ycf12, at least 3 peripheral proteins of the oxygen-evolving complex and a large number of cofactors. It forms dimeric complexes. The cofactor is The D1/D2 heterodimer binds P680, chlorophylls that are the primary electron donor of PSII, and subsequent electron acceptors. It shares a non-heme iron and each subunit binds pheophytin, quinone, additional chlorophylls, carotenoids and lipids. D1 provides most of the ligands for the Mn4-Ca-O5 cluster of the oxygen-evolving complex (OEC). There is also a Cl(-1) ion associated with D1 and D2, which is required for oxygen evolution. The PSII complex binds additional chlorophylls, carotenoids and specific lipids.. Post-translationally, tyr-161 forms a radical intermediate that is referred to as redox-active TyrZ, YZ or Y-Z. In terms of processing, C-terminally processed by CTPA; processing is essential to allow assembly of the oxygen-evolving complex and thus photosynthetic growth.

Its subcellular location is the plastid. It is found in the chloroplast thylakoid membrane. The catalysed reaction is 2 a plastoquinone + 4 hnu + 2 H2O = 2 a plastoquinol + O2. Functionally, photosystem II (PSII) is a light-driven water:plastoquinone oxidoreductase that uses light energy to abstract electrons from H(2)O, generating O(2) and a proton gradient subsequently used for ATP formation. It consists of a core antenna complex that captures photons, and an electron transfer chain that converts photonic excitation into a charge separation. The D1/D2 (PsbA/PsbD) reaction center heterodimer binds P680, the primary electron donor of PSII as well as several subsequent electron acceptors. This chain is Photosystem II protein D1, found in Buxus microphylla (Littleleaf boxwood).